A 463-amino-acid polypeptide reads, in one-letter code: Matrix remodeling-associated protein 8 (463 aa).

A signal peptide spans 1 to 19 (MELRAWVLLWRLVLLQSSA). The Extracellular segment spans residues 20-362 (VLLSSGPSGP…PEGRAHFFQQ (343 aa)). 2 Ig-like V-type domains span residues 29–173 (PATS…LEVT) and 176–308 (PRAA…LRVT). 2 disulfides stabilise this stretch: Cys54–Cys153 and Cys202–Cys288. N-linked (GlcNAc...) asparagine glycosylation is present at Asn135. Ser244 bears the Phosphoserine mark. Residues 268–270 (RGD) carry the RGD motif. The segment at 309-341 (EPAARPPPPPRDSPGNGSSHSGAPGPGARDPTL) is disordered. Residues 321 to 335 (SPGNGSSHSGAPGPG) are compositionally biased toward low complexity. The N-linked (GlcNAc...) asparagine glycan is linked to Asn324. The chain crosses the membrane as a helical span at residues 363-383 (LGYVLATLLLFILLLITVVLA). At 384-463 (TRQRRRGGYE…DKEFRKEYCK (80 aa)) the chain is on the cytoplasmic side.

As to quaternary structure, homodimer in cis. Does not appear to form trans-homodimers. Interacts with ITGB3; the interaction inhibits ITGAV:ITGB3 heterodimer formation.

Its subcellular location is the cell membrane. The protein resides in the cell junction. It localises to the tight junction. It is found in the cytoplasm. The protein localises to the cell projection. Its subcellular location is the cilium membrane. The protein resides in the nucleus. Transmembrane protein which can modulate activity of various signaling pathways, probably via binding to integrin ITGAV:ITGB3. Mediates heterophilic cell-cell interactions in vitro. Inhibits osteoclastogenesis downstream of TNFSF11/RANKL and CSF1, where it may function by attenuating signaling via integrin ITGB3 and MAP kinase p38. Plays a role in cartilage formation where it promotes proliferation and maturation of growth plate chondrocytes. Stimulates formation of primary cilia in chondrocytes. Enhances expression of genes involved in the hedgehog signaling pathway in chondrocytes, including the hedgehog signaling molecule IHH; may also promote signaling via the PTHLH/PTHrP pathway. Plays a role in angiogenesis where it suppresses migration of endothelial cells and also promotes their apoptosis. Inhibits VEGF-induced activation of AKT and p38 MAP kinase in endothelial cells. Also inhibits VTN (vitronectin)-mediated integrin ITGAV:ITGB3 signaling and activation of PTK2/FAK. May play a role in the maturation and maintenance of the blood-brain barrier. This Bos taurus (Bovine) protein is Matrix remodeling-associated protein 8 (MXRA8).